The following is a 317-amino-acid chain: Acetyl-coenzyme A carboxylase carboxyl transferase subunit alpha (317 aa).

In terms of domain architecture, CoA carboxyltransferase C-terminal spans 40 to 293; sequence LEGRVRDAMM…GTVIADALKE (254 aa).

It belongs to the AccA family. As to quaternary structure, acetyl-CoA carboxylase is a heterohexamer composed of biotin carboxyl carrier protein (AccB), biotin carboxylase (AccC) and two subunits each of ACCase subunit alpha (AccA) and ACCase subunit beta (AccD).

It is found in the cytoplasm. The enzyme catalyses N(6)-carboxybiotinyl-L-lysyl-[protein] + acetyl-CoA = N(6)-biotinyl-L-lysyl-[protein] + malonyl-CoA. It functions in the pathway lipid metabolism; malonyl-CoA biosynthesis; malonyl-CoA from acetyl-CoA: step 1/1. Component of the acetyl coenzyme A carboxylase (ACC) complex. First, biotin carboxylase catalyzes the carboxylation of biotin on its carrier protein (BCCP) and then the CO(2) group is transferred by the carboxyltransferase to acetyl-CoA to form malonyl-CoA. This is Acetyl-coenzyme A carboxylase carboxyl transferase subunit alpha from Sinorhizobium fredii (strain NBRC 101917 / NGR234).